We begin with the raw amino-acid sequence, 155 residues long: 3-hydroxyacyl-[acyl-carrier-protein] dehydratase FabZ (155 aa).

Residue His-61 is part of the active site.

It belongs to the thioester dehydratase family. FabZ subfamily.

It is found in the cytoplasm. It carries out the reaction a (3R)-hydroxyacyl-[ACP] = a (2E)-enoyl-[ACP] + H2O. Its function is as follows. Involved in unsaturated fatty acids biosynthesis. Catalyzes the dehydration of short chain beta-hydroxyacyl-ACPs and long chain saturated and unsaturated beta-hydroxyacyl-ACPs. The protein is 3-hydroxyacyl-[acyl-carrier-protein] dehydratase FabZ of Synechococcus elongatus (strain ATCC 33912 / PCC 7942 / FACHB-805) (Anacystis nidulans R2).